Reading from the N-terminus, the 741-residue chain is Methionine--tRNA ligase (741 aa).

A 'HIGH' region motif is present at residues 11-21 (PYANGPIHAGH). Zn(2+) contacts are provided by Cys143, Cys146, Cys156, and Cys159. Positions 345–349 (KFSTS) match the 'KMSKS' region motif. Residue Thr348 participates in ATP binding. The tRNA-binding domain maps to 641 to 741 (EFAKLDLRVG…KEVKLGARIR (101 aa)).

The protein belongs to the class-I aminoacyl-tRNA synthetase family. MetG type 1 subfamily. Homodimer. Requires Zn(2+) as cofactor.

It localises to the cytoplasm. The catalysed reaction is tRNA(Met) + L-methionine + ATP = L-methionyl-tRNA(Met) + AMP + diphosphate. Its function is as follows. Is required not only for elongation of protein synthesis but also for the initiation of all mRNA translation through initiator tRNA(fMet) aminoacylation. In Thermococcus kodakarensis (strain ATCC BAA-918 / JCM 12380 / KOD1) (Pyrococcus kodakaraensis (strain KOD1)), this protein is Methionine--tRNA ligase.